Consider the following 415-residue polypeptide: Tyrosine--tRNA ligase (415 aa).

The 'HIGH' region motif lies at P54–H63. Residues K248–S252 carry the 'KMSKS' region motif. K251 lines the ATP pocket. An S4 RNA-binding domain is found at A351 to A415.

This sequence belongs to the class-I aminoacyl-tRNA synthetase family. TyrS type 2 subfamily. As to quaternary structure, homodimer.

It is found in the cytoplasm. It catalyses the reaction tRNA(Tyr) + L-tyrosine + ATP = L-tyrosyl-tRNA(Tyr) + AMP + diphosphate + H(+). In terms of biological role, catalyzes the attachment of tyrosine to tRNA(Tyr) in a two-step reaction: tyrosine is first activated by ATP to form Tyr-AMP and then transferred to the acceptor end of tRNA(Tyr). This is Tyrosine--tRNA ligase from Parasynechococcus marenigrum (strain WH8102).